Reading from the N-terminus, the 174-residue chain is Xanthine-guanine phosphoribosyltransferase (174 aa).

Residues Arg49–Gly50 and Asp108–Thr116 each bind 5-phospho-alpha-D-ribose 1-diphosphate. Residue Asp109 coordinates Mg(2+). Guanine contacts are provided by Asp112 and Ile155. Asp112 and Ile155 together coordinate xanthine. GMP is bound by residues Asp112–Thr116 and Trp154–Ile155.

It belongs to the purine/pyrimidine phosphoribosyltransferase family. XGPT subfamily. Homotetramer. Mg(2+) is required as a cofactor.

The protein localises to the cell inner membrane. It catalyses the reaction GMP + diphosphate = guanine + 5-phospho-alpha-D-ribose 1-diphosphate. The enzyme catalyses XMP + diphosphate = xanthine + 5-phospho-alpha-D-ribose 1-diphosphate. The catalysed reaction is IMP + diphosphate = hypoxanthine + 5-phospho-alpha-D-ribose 1-diphosphate. The protein operates within purine metabolism; GMP biosynthesis via salvage pathway; GMP from guanine: step 1/1. It functions in the pathway purine metabolism; XMP biosynthesis via salvage pathway; XMP from xanthine: step 1/1. In terms of biological role, purine salvage pathway enzyme that catalyzes the transfer of the ribosyl-5-phosphate group from 5-phospho-alpha-D-ribose 1-diphosphate (PRPP) to the N9 position of the 6-oxopurines guanine and xanthine to form the corresponding ribonucleotides GMP (guanosine 5'-monophosphate) and XMP (xanthosine 5'-monophosphate), with the release of PPi. To a lesser extent, also acts on hypoxanthine. The chain is Xanthine-guanine phosphoribosyltransferase from Rhodopseudomonas palustris (strain BisB18).